The chain runs to 535 residues: T-complex protein 1 subunit zeta (535 aa).

The protein belongs to the TCP-1 chaperonin family. In terms of assembly, heterooligomeric complex of about 850 to 900 kDa that forms two stacked rings, 12 to 16 nm in diameter.

The protein localises to the cytoplasm. In terms of biological role, molecular chaperone; assists the folding of proteins upon ATP hydrolysis. Known to play a role, in vitro, in the folding of actin and tubulin. In Schizosaccharomyces pombe (strain 972 / ATCC 24843) (Fission yeast), this protein is T-complex protein 1 subunit zeta (cct6).